The sequence spans 144 residues: uncharacterized protein (144 aa).

The Rhodanese domain maps to 50–140 (NQDKAIVVDT…YWKTDNLPLI (91 aa)).

This is an uncharacterized protein from Buchnera aphidicola subsp. Acyrthosiphon pisum (strain APS) (Acyrthosiphon pisum symbiotic bacterium).